We begin with the raw amino-acid sequence, 193 residues long: Penicillin-binding protein activator LpoB (193 aa).

The first 16 residues, 1-16, serve as a signal peptide directing secretion; the sequence is MKRYLSVALAALVLTG. Cys17 carries N-palmitoyl cysteine lipidation. Cys17 carries S-diacylglycerol cysteine lipidation. A disordered region spans residues 24–55; that stretch reads EPTTPPVTIEPVTPPVPETPPPVDNVPPPPKM. A compositionally biased stretch (pro residues) spans 35–54; the sequence is VTPPVPETPPPVDNVPPPPK.

It belongs to the LpoB family. In terms of assembly, interacts with PBP1b.

It localises to the cell outer membrane. Regulator of peptidoglycan synthesis that is essential for the function of penicillin-binding protein 1B (PBP1b). This Yersinia enterocolitica serotype O:8 / biotype 1B (strain NCTC 13174 / 8081) protein is Penicillin-binding protein activator LpoB.